We begin with the raw amino-acid sequence, 447 residues long: Tubulin beta-1 chain (447 aa).

The GTP site is built by Q11, E69, S138, G142, T143, G144, N204, and N226. E69 is a Mg(2+) binding site.

It belongs to the tubulin family. Dimer of alpha and beta chains. A typical microtubule is a hollow water-filled tube with an outer diameter of 25 nm and an inner diameter of 15 nM. Alpha-beta heterodimers associate head-to-tail to form protofilaments running lengthwise along the microtubule wall with the beta-tubulin subunit facing the microtubule plus end conferring a structural polarity. Microtubules usually have 13 protofilaments but different protofilament numbers can be found in some organisms and specialized cells. Mg(2+) serves as cofactor.

Its subcellular location is the cytoplasm. The protein resides in the cytoskeleton. Tubulin is the major constituent of microtubules, a cylinder consisting of laterally associated linear protofilaments composed of alpha- and beta-tubulin heterodimers. Microtubules grow by the addition of GTP-tubulin dimers to the microtubule end, where a stabilizing cap forms. Below the cap, tubulin dimers are in GDP-bound state, owing to GTPase activity of alpha-tubulin. The sequence is that of Tubulin beta-1 chain from Geotrichum candidum (Oospora lactis).